The chain runs to 199 residues: Probable GTP-binding protein EngB (199 aa).

The region spanning 28–199 is the EngB-type G domain; it reads DLPEVALAGR…EAWDTILAEL (172 aa). GTP contacts are provided by residues 36–43, 63–67, 81–84, 148–151, and 180–182; these read GRSNVGKS, GKTQL, DVPG, TKAD, and FSS. Residues serine 43 and threonine 65 each coordinate Mg(2+).

This sequence belongs to the TRAFAC class TrmE-Era-EngA-EngB-Septin-like GTPase superfamily. EngB GTPase family. Requires Mg(2+) as cofactor.

In terms of biological role, necessary for normal cell division and for the maintenance of normal septation. The chain is Probable GTP-binding protein EngB from Streptococcus thermophilus (strain CNRZ 1066).